Reading from the N-terminus, the 316-residue chain is Thiamine-monophosphate kinase (316 aa).

D26, T49, and D50 together coordinate Mg(2+). D57 serves as a coordination point for substrate. D79 is a binding site for Mg(2+). Residues Y109, 126–127 (GD), and R151 each bind ATP. Residue D127 participates in Mg(2+) binding. D198 is a binding site for Mg(2+). Residue S200 coordinates ATP. D201 serves as a coordination point for Mg(2+). Positions 251 and 305 each coordinate substrate.

This sequence belongs to the thiamine-monophosphate kinase family.

The catalysed reaction is thiamine phosphate + ATP = thiamine diphosphate + ADP. It participates in cofactor biosynthesis; thiamine diphosphate biosynthesis; thiamine diphosphate from thiamine phosphate: step 1/1. In terms of biological role, catalyzes the ATP-dependent phosphorylation of thiamine-monophosphate (TMP) to form thiamine-pyrophosphate (TPP), the active form of vitamin B1. The sequence is that of Thiamine-monophosphate kinase from Rhodopirellula baltica (strain DSM 10527 / NCIMB 13988 / SH1).